The sequence spans 722 residues: Polyribonucleotide nucleotidyltransferase (722 aa).

The Mg(2+) site is built by Asp498 and Asp504. The KH domain maps to 565–624 (PQFHTMKIDPDKIRDIIGKGGATIRSITEETGASIDIDDNGTIKIYADDGDGMQAAIARI). The region spanning 634-702 (GAVYQGKVVR…QRGRIKLSIK (69 aa)) is the S1 motif domain.

Belongs to the polyribonucleotide nucleotidyltransferase family. In terms of assembly, component of the RNA degradosome, which is a multiprotein complex involved in RNA processing and mRNA degradation. It depends on Mg(2+) as a cofactor.

It is found in the cytoplasm. The enzyme catalyses RNA(n+1) + phosphate = RNA(n) + a ribonucleoside 5'-diphosphate. Functionally, involved in mRNA degradation. Catalyzes the phosphorolysis of single-stranded polyribonucleotides processively in the 3'- to 5'-direction. The chain is Polyribonucleotide nucleotidyltransferase from Saccharophagus degradans (strain 2-40 / ATCC 43961 / DSM 17024).